Here is a 633-residue protein sequence, read N- to C-terminus: tRNA uridine 5-carboxymethylaminomethyl modification enzyme MnmG (633 aa).

FAD-binding positions include 13–18, Val-125, and Ser-180; that span reads GGGHAG. 273-287 is a binding site for NAD(+); sequence GPRYCPSIEDKITRF. Gln-370 is an FAD binding site.

The protein belongs to the MnmG family. In terms of assembly, homodimer. Heterotetramer of two MnmE and two MnmG subunits. It depends on FAD as a cofactor.

The protein resides in the cytoplasm. Functionally, NAD-binding protein involved in the addition of a carboxymethylaminomethyl (cmnm) group at the wobble position (U34) of certain tRNAs, forming tRNA-cmnm(5)s(2)U34. The protein is tRNA uridine 5-carboxymethylaminomethyl modification enzyme MnmG of Alteromonas mediterranea (strain DSM 17117 / CIP 110805 / LMG 28347 / Deep ecotype).